A 650-amino-acid chain; its full sequence is Fructose-1,6-bisphosphatase class 3 (650 aa).

This sequence belongs to the FBPase class 3 family. Requires Mn(2+) as cofactor.

The enzyme catalyses beta-D-fructose 1,6-bisphosphate + H2O = beta-D-fructose 6-phosphate + phosphate. Its pathway is carbohydrate biosynthesis; gluconeogenesis. The chain is Fructose-1,6-bisphosphatase class 3 from Staphylococcus saprophyticus subsp. saprophyticus (strain ATCC 15305 / DSM 20229 / NCIMB 8711 / NCTC 7292 / S-41).